Here is a 275-residue protein sequence, read N- to C-terminus: Small ribosomal subunit protein uS2 (275 aa).

Positions 226-275 (AAAPNSASVREEEFSAEAGDEGKGRRAPAKKATEKKADAPAAAPEAPAAE) are disordered. Residues 264-275 (APAAAPEAPAAE) show a composition bias toward low complexity.

This sequence belongs to the universal ribosomal protein uS2 family.

In Xanthomonas campestris pv. campestris (strain ATCC 33913 / DSM 3586 / NCPPB 528 / LMG 568 / P 25), this protein is Small ribosomal subunit protein uS2.